Consider the following 287-residue polypeptide: ATP synthase gamma chain (287 aa).

Belongs to the ATPase gamma chain family. As to quaternary structure, F-type ATPases have 2 components, CF(1) - the catalytic core - and CF(0) - the membrane proton channel. CF(1) has five subunits: alpha(3), beta(3), gamma(1), delta(1), epsilon(1). CF(0) has three main subunits: a, b and c.

It localises to the cell inner membrane. Its function is as follows. Produces ATP from ADP in the presence of a proton gradient across the membrane. The gamma chain is believed to be important in regulating ATPase activity and the flow of protons through the CF(0) complex. The protein is ATP synthase gamma chain of Geotalea uraniireducens (strain Rf4) (Geobacter uraniireducens).